Reading from the N-terminus, the 571-residue chain is Proline--tRNA ligase (571 aa).

Belongs to the class-II aminoacyl-tRNA synthetase family. ProS type 1 subfamily. Homodimer.

The protein localises to the cytoplasm. It catalyses the reaction tRNA(Pro) + L-proline + ATP = L-prolyl-tRNA(Pro) + AMP + diphosphate. Functionally, catalyzes the attachment of proline to tRNA(Pro) in a two-step reaction: proline is first activated by ATP to form Pro-AMP and then transferred to the acceptor end of tRNA(Pro). As ProRS can inadvertently accommodate and process non-cognate amino acids such as alanine and cysteine, to avoid such errors it has two additional distinct editing activities against alanine. One activity is designated as 'pretransfer' editing and involves the tRNA(Pro)-independent hydrolysis of activated Ala-AMP. The other activity is designated 'posttransfer' editing and involves deacylation of mischarged Ala-tRNA(Pro). The misacylated Cys-tRNA(Pro) is not edited by ProRS. This is Proline--tRNA ligase from Haemophilus ducreyi (strain 35000HP / ATCC 700724).